The sequence spans 429 residues: Phosphoribosylamine--glycine ligase (429 aa).

An ATP-grasp domain is found at K109–D316. L135–S196 is a binding site for ATP. The interval M209–G231 is disordered. Mg(2+)-binding residues include E286 and N288.

Belongs to the GARS family. It depends on Mg(2+) as a cofactor. Mn(2+) is required as a cofactor.

It carries out the reaction 5-phospho-beta-D-ribosylamine + glycine + ATP = N(1)-(5-phospho-beta-D-ribosyl)glycinamide + ADP + phosphate + H(+). The protein operates within purine metabolism; IMP biosynthesis via de novo pathway; N(1)-(5-phospho-D-ribosyl)glycinamide from 5-phospho-alpha-D-ribose 1-diphosphate: step 2/2. The chain is Phosphoribosylamine--glycine ligase from Pasteurella multocida (strain Pm70).